The chain runs to 230 residues: Phosphoenolpyruvate guanylyltransferase (230 aa).

Positions 139, 155, and 158 each coordinate phosphoenolpyruvate.

The protein belongs to the CofC family.

The catalysed reaction is phosphoenolpyruvate + GTP + H(+) = enolpyruvoyl-2-diphospho-5'-guanosine + diphosphate. It functions in the pathway cofactor biosynthesis; coenzyme F420 biosynthesis. Guanylyltransferase that catalyzes the activation of phosphoenolpyruvate (PEP) as enolpyruvoyl-2-diphospho-5'-guanosine, via the condensation of PEP with GTP. It is involved in the biosynthesis of coenzyme F420, a hydride carrier cofactor. This is Phosphoenolpyruvate guanylyltransferase from Thermobaculum terrenum (strain ATCC BAA-798 / CCMEE 7001 / YNP1).